A 216-amino-acid polypeptide reads, in one-letter code: Inorganic pyrophosphatase (216 aa).

Substrate-binding residues include Lys39, Arg53, and Tyr65. Asp93, Asp98, and Asp131 together coordinate Mg(2+). Residue Tyr168 coordinates substrate.

The protein belongs to the PPase family. In terms of assembly, homohexamer. It depends on Mg(2+) as a cofactor.

Its subcellular location is the cytoplasm. The enzyme catalyses diphosphate + H2O = 2 phosphate + H(+). Functionally, catalyzes the hydrolysis of inorganic pyrophosphate (PPi) forming two phosphate ions. In Chlamydia caviae (strain ATCC VR-813 / DSM 19441 / 03DC25 / GPIC) (Chlamydophila caviae), this protein is Inorganic pyrophosphatase.